A 272-amino-acid chain; its full sequence is Tryptophan synthase alpha chain (272 aa).

Residues E49 and D60 each act as proton acceptor in the active site.

The protein belongs to the TrpA family. As to quaternary structure, tetramer of two alpha and two beta chains.

The enzyme catalyses (1S,2R)-1-C-(indol-3-yl)glycerol 3-phosphate + L-serine = D-glyceraldehyde 3-phosphate + L-tryptophan + H2O. The protein operates within amino-acid biosynthesis; L-tryptophan biosynthesis; L-tryptophan from chorismate: step 5/5. The alpha subunit is responsible for the aldol cleavage of indoleglycerol phosphate to indole and glyceraldehyde 3-phosphate. In Polaromonas sp. (strain JS666 / ATCC BAA-500), this protein is Tryptophan synthase alpha chain.